We begin with the raw amino-acid sequence, 477 residues long: MRSNILSLRAILDKKPSAINDVLTSINAKIELNKSSNFLLKNTVEIYSKKINKSDEKILLNNIPYVLKDNIATKDIVTTGGSLFLKNYLPPFSATVFELLEMNGALLVGKANMDEFGLGGTGSYSAFGVVHHPENSSLIAGGSSSGSAYAVAKDIVPFSIATDTGDSIRRPASICNVVGFKPTYGLISRNGVFPYAPSMDHVGIFAKFVSDIAIVSDVVIKHDKTDFSSQKSPDENQFFNELAIPFTRSIRFGYLKPLEKLFNKHLQKKWNNLKKTLEQKNYQLIPLDFDVELLKVIDSIYKIISYSEAVSCYSNLTGIVFGQKVFEPNSPSNFDQTITRNRDQFLGKQLKRRFVIGAFATDEKNFEKYFEKAQKIRRVLVDNFLNLFSDVDFVLSPSASCFASTIEDIQANKPYTNIIDDFLQLANFAGSPSITIPWLVQTKDQTIGLSISANCFEDKKLLQIAYWFEQLFDLNHD.

Residues lysine 68 and serine 143 each act as charge relay system in the active site. Serine 167 serves as the catalytic Acyl-ester intermediate.

Belongs to the amidase family. GatA subfamily. In terms of assembly, heterotrimer of A, B and C subunits.

The enzyme catalyses L-glutamyl-tRNA(Gln) + L-glutamine + ATP + H2O = L-glutaminyl-tRNA(Gln) + L-glutamate + ADP + phosphate + H(+). In terms of biological role, allows the formation of correctly charged Gln-tRNA(Gln) through the transamidation of misacylated Glu-tRNA(Gln) in organisms which lack glutaminyl-tRNA synthetase. The reaction takes place in the presence of glutamine and ATP through an activated gamma-phospho-Glu-tRNA(Gln). This chain is Glutamyl-tRNA(Gln) amidotransferase subunit A (gatA), found in Mycoplasma genitalium (strain ATCC 33530 / DSM 19775 / NCTC 10195 / G37) (Mycoplasmoides genitalium).